Consider the following 142-residue polypeptide: Hemoglobin subunit alpha-A (142 aa).

One can recognise a Globin domain in the interval 2–142 (VLSANDKTNV…VGNVLTAKYR (141 aa)). Position 59 (His-59) interacts with O2. Heme b is bound at residue His-88.

The protein belongs to the globin family. As to quaternary structure, heterotetramer of two alpha chains and two beta chains. In terms of tissue distribution, red blood cells.

Involved in oxygen transport from the lung to the various peripheral tissues. The polypeptide is Hemoglobin subunit alpha-A (HBAA) (Aquila chrysaetos (Golden eagle)).